A 558-amino-acid polypeptide reads, in one-letter code: Factor VII-activating protease (558 aa).

Residues 1–23 (MFARMSDLHVLLLMVLAGKTAFG) form the signal peptide. A glycan (N-linked (GlcNAc...) asparagine) is linked at Asn54. EGF-like domains lie at 71-107 (EDDPCLSNPCTHGGDCLVSGATFTCRCPDPFSGNRCQ), 109-146 (VQNKCKNNPCGRGDCLITQSPPYHRCACKHPYRGSDCS), and 148-186 (VVPVCRPNPCQNGGTCSRQRRRSKFTCACPDQFKGKLCE). 18 cysteine pairs are disulfide-bonded: Cys75/Cys86, Cys80/Cys95, Cys97/Cys106, Cys113/Cys123, Cys118/Cys134, Cys136/Cys145, Cys152/Cys163, Cys157/Cys174, Cys176/Cys185, Cys192/Cys274, Cys213/Cys255, Cys244/Cys269, Cys299/Cys433, Cys345/Cys361, Cys353/Cys422, Cys445/Cys513, Cys475/Cys491, and Cys503/Cys531. The 84-residue stretch at 191 to 274 (DCYVDDGYSY…KWEYCDVPAC (84 aa)) folds into the Kringle domain. The Peptidase S1 domain maps to 312–553 (IFGGFKSTAG…FLTWIKATME (242 aa)). Catalysis depends on charge relay system residues His360 and Asp409. Ser507 acts as the Charge relay system in catalysis.

The protein belongs to the peptidase S1 family. In terms of assembly, heterodimer; disulfide-linked. Heterodimer of a 50 kDa heavy and a 27 kDa light chain linked by a disulfide bond. Post-translationally, proteolytic cleavage at Gly-23 or Leu-27 can give rise to the 50 kDa heavy chain (HC) and cleavage at Arg-311 or Lys-317 can give rise to the 27 kDa light chain (LC). The HC can undergo further proteolytic cleavage giving rise to a 26 kDa fragment. The LC can undergo further proteolytic cleavage at Arg-311 leading to a 17-kDa fragment and at Arg-478 leading to a 8-kDa fragment.

It localises to the secreted. In terms of biological role, cleaves the alpha-chain at multiple sites and the beta-chain between 'Lys-53' and 'Lys-54' but not the gamma-chain of fibrinogen and therefore does not initiate the formation of the fibrin clot and does not cause the fibrinolysis directly. It does not cleave (activate) prothrombin and plasminogen but converts the inactive single chain urinary plasminogen activator (pro-urokinase) to the active two chain form. Activates coagulation factor VII. May function as a tumor suppressor negatively regulating cell proliferation and cell migration. This chain is Factor VII-activating protease (HABP2), found in Bos taurus (Bovine).